Here is a 203-residue protein sequence, read N- to C-terminus: Protein GrpE (203 aa).

Positions Met-1–Gln-10 are enriched in basic and acidic residues. The interval Met-1–Glu-20 is disordered.

The protein belongs to the GrpE family. In terms of assembly, homodimer.

The protein resides in the cytoplasm. Participates actively in the response to hyperosmotic and heat shock by preventing the aggregation of stress-denatured proteins, in association with DnaK and GrpE. It is the nucleotide exchange factor for DnaK and may function as a thermosensor. Unfolded proteins bind initially to DnaJ; upon interaction with the DnaJ-bound protein, DnaK hydrolyzes its bound ATP, resulting in the formation of a stable complex. GrpE releases ADP from DnaK; ATP binding to DnaK triggers the release of the substrate protein, thus completing the reaction cycle. Several rounds of ATP-dependent interactions between DnaJ, DnaK and GrpE are required for fully efficient folding. The protein is Protein GrpE of Shewanella sp. (strain MR-4).